We begin with the raw amino-acid sequence, 109 residues long: N-cym protein (109 aa).

In terms of assembly, interacts with MYCN and GSK3B. As to expression, expressed in the neuronal cells of the cerebrum and cerebellum, spermatocytes of the testis, pancreatic cells and also the heart. Expressed in both primary and metastatic neuroblastomas and in thyroid tumors (at protein level). Expression is associated with poor prognosis in neuroblastoma. Expressed in the fetal brain, lung, liver and kidney at varying low levels.

It is found in the cytoplasm. The protein localises to the nucleus. Its function is as follows. Regulates stability of MYCN in neuroblastoma cells by inhibiting GSK3B-mediated MYCN phosphorylation. Inhibits GSK3B activity by promoting its phosphorylation at 'Ser-9'. In Homo sapiens (Human), this protein is N-cym protein (MYCNOS).